A 537-amino-acid polypeptide reads, in one-letter code: Phosphoenolpyruvate carboxykinase (ATP) (537 aa).

Residues R61, Y195, and K201 each coordinate substrate. ATP is bound by residues K201, H220, and 236–244; that span reads GLSGTGKTT. The Mn(2+) site is built by K201 and H220. D257 contributes to the Mn(2+) binding site. E285 contributes to the ATP binding site. The span at 311-321 shows a compositional bias: basic and acidic residues; the sequence is PDFDNGSKTEN. The segment at 311–342 is disordered; the sequence is PDFDNGSKTENTRSAYPLESIPNASPTGRAGQ. R323 contributes to the substrate binding site. ATP-binding residues include R323 and T448.

It belongs to the phosphoenolpyruvate carboxykinase (ATP) family. Requires Mn(2+) as cofactor.

It is found in the cytoplasm. The enzyme catalyses oxaloacetate + ATP = phosphoenolpyruvate + ADP + CO2. It participates in carbohydrate biosynthesis; gluconeogenesis. Its function is as follows. Involved in the gluconeogenesis. Catalyzes the conversion of oxaloacetate (OAA) to phosphoenolpyruvate (PEP) through direct phosphoryl transfer between the nucleoside triphosphate and OAA. This chain is Phosphoenolpyruvate carboxykinase (ATP), found in Rhodopseudomonas palustris (strain BisB5).